Here is a 92-residue protein sequence, read N- to C-terminus: Small ribosomal subunit protein bS20 (92 aa).

This sequence belongs to the bacterial ribosomal protein bS20 family.

Binds directly to 16S ribosomal RNA. The protein is Small ribosomal subunit protein bS20 of Rickettsia africae (strain ESF-5).